The sequence spans 341 residues: Spindolin (341 aa).

A signal peptide spans 1-20 (MNKLILISLIASLYQVEVDA).

As to quaternary structure, homodimer; disulfide-linked.

Its function is as follows. This protein is a spindle body protein. This chain is Spindolin (SPH), found in Choristoneura biennis entomopoxvirus (CbEPV).